Reading from the N-terminus, the 358-residue chain is 4-hydroxy-3-methylbut-2-en-1-yl diphosphate synthase (flavodoxin) (358 aa).

C270, C273, C305, and E312 together coordinate [4Fe-4S] cluster.

The protein belongs to the IspG family. It depends on [4Fe-4S] cluster as a cofactor.

It catalyses the reaction (2E)-4-hydroxy-3-methylbut-2-enyl diphosphate + oxidized [flavodoxin] + H2O + 2 H(+) = 2-C-methyl-D-erythritol 2,4-cyclic diphosphate + reduced [flavodoxin]. The protein operates within isoprenoid biosynthesis; isopentenyl diphosphate biosynthesis via DXP pathway; isopentenyl diphosphate from 1-deoxy-D-xylulose 5-phosphate: step 5/6. Its function is as follows. Converts 2C-methyl-D-erythritol 2,4-cyclodiphosphate (ME-2,4cPP) into 1-hydroxy-2-methyl-2-(E)-butenyl 4-diphosphate. In Ruthia magnifica subsp. Calyptogena magnifica, this protein is 4-hydroxy-3-methylbut-2-en-1-yl diphosphate synthase (flavodoxin).